A 412-amino-acid chain; its full sequence is NADH-quinone oxidoreductase subunit 4 (412 aa).

The protein belongs to the complex I 49 kDa subunit family. In terms of assembly, NDH-1 is composed of at least 14 different subunits, Nqo1 to Nqo14. The complex has a L-shaped structure, with the hydrophobic arm (subunits Nqo7, Nqo8, Nqo10 to Nqo14) embedded in the inner membrane and the hydrophilic peripheral arm (subunits Nqo1 to Nqo6, Nqo9) protruding into the bacterial cytoplasm. The hydrophilic domain contains all the redox centers.

The protein resides in the cell inner membrane. It carries out the reaction a quinone + NADH + 5 H(+)(in) = a quinol + NAD(+) + 4 H(+)(out). Its function is as follows. NDH-1 shuttles electrons from NADH, via FMN and iron-sulfur (Fe-S) centers, to quinones in the respiratory chain. The immediate electron acceptor for the enzyme in this species is believed to be ubiquinone. Couples the redox reaction to proton translocation (for every two electrons transferred, four hydrogen ions are translocated across the cytoplasmic membrane), and thus conserves the redox energy in a proton gradient. In Paracoccus denitrificans, this protein is NADH-quinone oxidoreductase subunit 4 (nqo4).